A 326-amino-acid chain; its full sequence is MSQYVVCALYKFVELNNYQELREPLLALMEKHHIRGTLLLAGEGINGTVASDRAGIDTLLEWLNTEPRLTGTVYKESYSETQPFNRTKVKLKKEIVTLGVEGIDPRHVVGTYVKPQDWNDLIADPEVFVVDTRNDYEIEIGTFKGAVNPNTETFREFPDYVKENMDPAKHKKVAMFCTGGIRCEKSTAYMKEQGFEEVYHLEGGILKYLEEVPQEESMWEGDCYVFDGRVAVNHQLEKADYDLCNACRLPITDEDKQSELFEQGVSCPKCHGKHSEEQVERFREREKQVSLANQRGEQHVGGESAKQRAQRREAKLAKKAAQRKQA.

Positions 123–217 (ADPEVFVVDT…YLEEVPQEES (95 aa)) constitute a Rhodanese domain. The active-site Cysteine persulfide intermediate is the C177. The span at 278 to 288 (QVERFREREKQ) shows a compositional bias: basic and acidic residues. The disordered stretch occupies residues 278 to 326 (QVERFREREKQVSLANQRGEQHVGGESAKQRAQRREAKLAKKAAQRKQA). Residues 317 to 326 (AKKAAQRKQA) show a composition bias toward basic residues.

The protein belongs to the TrhO family.

The enzyme catalyses uridine(34) in tRNA + AH2 + O2 = 5-hydroxyuridine(34) in tRNA + A + H2O. Functionally, catalyzes oxygen-dependent 5-hydroxyuridine (ho5U) modification at position 34 in tRNAs. This chain is tRNA uridine(34) hydroxylase, found in Vibrio parahaemolyticus serotype O3:K6 (strain RIMD 2210633).